The primary structure comprises 990 residues: Storkhead-box protein 1 (990 aa).

Basic and acidic residues predominate over residues 396–408 (TTRHKDSSKEVIG). Disordered regions lie at residues 396 to 471 (TTRH…VHHL), 562 to 586 (VAKAPVHPVSDDFRGGPGNYPPRRV), 712 to 736 (GLSDSEQDQVALSHSDPGAGDDGGC), and 809 to 832 (LFSNAGESPNPDLSDNPGQNSRIP). The segment covering 416–431 (KSRRRGSSHKGRHKAR) has biased composition (basic residues). Over residues 809–830 (LFSNAGESPNPDLSDNPGQNSR) the composition is skewed to polar residues.

As to expression, detected in sensory epithelial cells of the inner ear but not in adjacent surrounding tissue (at protein level).

It localises to the nucleus. It is found in the cytoplasm. The protein localises to the cytoskeleton. Its subcellular location is the microtubule organizing center. The protein resides in the centrosome. Functionally, involved in regulating the levels of reactive oxidative species and reactive nitrogen species and in mitochondrial homeostasis in the placenta. Required for regulation of inner ear epithelial cell proliferation via the AKT signaling pathway. Involved in cell cycle regulation by binding to the CCNB1 promoter, up-regulating its expression and promoting mitotic entry. Induces phosphorylation of MAPT/tau. This chain is Storkhead-box protein 1, found in Mus musculus (Mouse).